The chain runs to 308 residues: Cyclin-D2-1 (308 aa).

The tract at residues 286-308 is disordered; it reads EGLSYDSSSPPPPKRRKRSPPGT. Residues 298–308 show a composition bias toward basic residues; sequence PKRRKRSPPGT.

It belongs to the cyclin family. Cyclin D subfamily.

The polypeptide is Cyclin-D2-1 (CYCD2-1) (Oryza sativa subsp. japonica (Rice)).